The chain runs to 172 residues: MNWLAQLPTQRTPWLLFSGIVFLLEITALFFQYKMGLAPCIMCIYQRTAVLGLLIAGIIGTSNPEHRGVRLLAYSVWAVSSVWGFIIAREHIEMQTTTDPFAFSCEFEPNFPAFMPLHEWIPSFFAATGDCGNIDWQFAGLSMPAWMEVIFALFAATLFLLVTSRLMTKRSL.

Over methionine 1 to proline 13 the chain is Cytoplasmic. Residues tryptophan 14 to phenylalanine 30 form a helical membrane-spanning segment. The Periplasmic portion of the chain corresponds to phenylalanine 31–threonine 48. Cysteine 40 and cysteine 43 are oxidised to a cystine. A helical transmembrane segment spans residues alanine 49–proline 64. Residues glutamate 65 to leucine 71 lie on the Cytoplasmic side of the membrane. The chain crosses the membrane as a helical span at residues leucine 72–arginine 89. Residues glutamate 90–alanine 145 lie on the Periplasmic side of the membrane. Cysteine 105 and cysteine 131 are oxidised to a cystine. The chain crosses the membrane as a helical span at residues tryptophan 146–serine 164. Over arginine 165–leucine 172 the chain is Cytoplasmic.

The protein belongs to the DsbB family.

Its subcellular location is the cell inner membrane. Required for disulfide bond formation in some periplasmic proteins. Acts by oxidizing the DsbA protein. In Pseudoalteromonas translucida (strain TAC 125), this protein is Disulfide bond formation protein B.